The chain runs to 319 residues: Transaldolase (319 aa).

The active-site Schiff-base intermediate with substrate is the Lys125.

The protein belongs to the transaldolase family. Type 1 subfamily. Homodimer.

It localises to the cytoplasm. It catalyses the reaction D-sedoheptulose 7-phosphate + D-glyceraldehyde 3-phosphate = D-erythrose 4-phosphate + beta-D-fructose 6-phosphate. It participates in carbohydrate degradation; pentose phosphate pathway; D-glyceraldehyde 3-phosphate and beta-D-fructose 6-phosphate from D-ribose 5-phosphate and D-xylulose 5-phosphate (non-oxidative stage): step 2/3. Functionally, transaldolase is important for the balance of metabolites in the pentose-phosphate pathway. The sequence is that of Transaldolase from Ralstonia nicotianae (strain ATCC BAA-1114 / GMI1000) (Ralstonia solanacearum).